The sequence spans 486 residues: Protein nucleotidyltransferase YdiU (486 aa).

8 residues coordinate ATP: glycine 90, glycine 92, arginine 93, lysine 113, aspartate 125, glycine 126, arginine 176, and arginine 183. Aspartate 252 acts as the Proton acceptor in catalysis. Residues asparagine 253 and aspartate 262 each contribute to the Mg(2+) site. Residue aspartate 262 coordinates ATP.

It belongs to the SELO family. Mg(2+) is required as a cofactor. The cofactor is Mn(2+).

The enzyme catalyses L-seryl-[protein] + ATP = 3-O-(5'-adenylyl)-L-seryl-[protein] + diphosphate. It catalyses the reaction L-threonyl-[protein] + ATP = 3-O-(5'-adenylyl)-L-threonyl-[protein] + diphosphate. It carries out the reaction L-tyrosyl-[protein] + ATP = O-(5'-adenylyl)-L-tyrosyl-[protein] + diphosphate. The catalysed reaction is L-histidyl-[protein] + UTP = N(tele)-(5'-uridylyl)-L-histidyl-[protein] + diphosphate. The enzyme catalyses L-seryl-[protein] + UTP = O-(5'-uridylyl)-L-seryl-[protein] + diphosphate. It catalyses the reaction L-tyrosyl-[protein] + UTP = O-(5'-uridylyl)-L-tyrosyl-[protein] + diphosphate. Nucleotidyltransferase involved in the post-translational modification of proteins. It can catalyze the addition of adenosine monophosphate (AMP) or uridine monophosphate (UMP) to a protein, resulting in modifications known as AMPylation and UMPylation. The sequence is that of Protein nucleotidyltransferase YdiU from Pseudomonas aeruginosa (strain UCBPP-PA14).